The sequence spans 206 residues: Imidazoleglycerol-phosphate dehydratase (206 aa).

Positions 1–21 (MTALDSSRLLQPRTASVHRRT) are disordered.

Belongs to the imidazoleglycerol-phosphate dehydratase family.

The protein resides in the cytoplasm. It catalyses the reaction D-erythro-1-(imidazol-4-yl)glycerol 3-phosphate = 3-(imidazol-4-yl)-2-oxopropyl phosphate + H2O. It participates in amino-acid biosynthesis; L-histidine biosynthesis; L-histidine from 5-phospho-alpha-D-ribose 1-diphosphate: step 6/9. The protein is Imidazoleglycerol-phosphate dehydratase of Synechococcus sp. (strain JA-2-3B'a(2-13)) (Cyanobacteria bacterium Yellowstone B-Prime).